Consider the following 794-residue polypeptide: DNA ligase (794 aa).

NAD(+) is bound by residues 35 to 39 (DAEYD), 84 to 85 (SL), and glutamate 126. Residue lysine 128 is the N6-AMP-lysine intermediate of the active site. NAD(+) is bound by residues arginine 149, glutamate 186, lysine 302, and lysine 326. Cysteine 420, cysteine 423, cysteine 450, and cysteine 456 together coordinate Zn(2+). The 84-residue stretch at 711-794 (VEGLPLAGQT…KLFDEHGVAR (84 aa)) folds into the BRCT domain.

It belongs to the NAD-dependent DNA ligase family. LigA subfamily. The cofactor is Mg(2+). Mn(2+) is required as a cofactor.

The enzyme catalyses NAD(+) + (deoxyribonucleotide)n-3'-hydroxyl + 5'-phospho-(deoxyribonucleotide)m = (deoxyribonucleotide)n+m + AMP + beta-nicotinamide D-nucleotide.. In terms of biological role, DNA ligase that catalyzes the formation of phosphodiester linkages between 5'-phosphoryl and 3'-hydroxyl groups in double-stranded DNA using NAD as a coenzyme and as the energy source for the reaction. It is essential for DNA replication and repair of damaged DNA. This is DNA ligase from Pseudomonas aeruginosa (strain LESB58).